The following is a 240-amino-acid chain: MNKKILVVDDEESIVTLLQYNLERSGYDVITASDGEEALKKAETEKPDLIVLDVMLPKLDGIEVCKQLRQQKLMFPILMLTAKDEEFDKVLGLELGADDYMTKPFSPREVNARVKAILRRSEIAAPSSEMKNDEMEGQIVIGDLKILPDHYEAYFKESQLELTPKEFELLLYLGRHKGRVLTRDLLLSAVWNYDFAGDTRIVDVHISHLRDKIENNTKKPIYIKTIRGLGYKLEEPKMNE.

Residues 4-118 (KILVVDDEES…EVNARVKAIL (115 aa)) enclose the Response regulatory domain. 4-aspartylphosphate is present on Asp-53. Residues 136–235 (EGQIVIGDLK…IRGLGYKLEE (100 aa)) constitute a DNA-binding region (ompR/PhoB-type).

In terms of processing, phosphorylated by PhoR.

The protein localises to the cytoplasm. In terms of biological role, member of the two-component regulatory system PhoP/PhoR involved in the regulation of alkaline phosphatase genes phoA and phoB and of phosphodiesterase. This is Alkaline phosphatase synthesis transcriptional regulatory protein PhoP (phoP) from Bacillus subtilis (strain 168).